The primary structure comprises 348 residues: NADH-ubiquinone oxidoreductase chain 2 (348 aa).

A run of 9 helical transmembrane segments spans residues 3-23 (PYVL…TFAS), 60-80 (FLTQ…NAWM), 96-116 (TMFM…FWMP), 149-169 (IDPL…GWGG), 178-197 (ILAY…IQYA), 202-219 (LLAL…FLTL), 246-266 (LVLL…KWLI), 274-294 (DLPI…YFYL), and 326-346 (LALF…ILTL).

It belongs to the complex I subunit 2 family.

Its subcellular location is the mitochondrion inner membrane. It carries out the reaction a ubiquinone + NADH + 5 H(+)(in) = a ubiquinol + NAD(+) + 4 H(+)(out). In terms of biological role, core subunit of the mitochondrial membrane respiratory chain NADH dehydrogenase (Complex I) that is believed to belong to the minimal assembly required for catalysis. Complex I functions in the transfer of electrons from NADH to the respiratory chain. The immediate electron acceptor for the enzyme is believed to be ubiquinone. The sequence is that of NADH-ubiquinone oxidoreductase chain 2 (MT-ND2) from Carassius auratus (Goldfish).